A 239-amino-acid chain; its full sequence is Small ribosomal subunit protein uS3 (239 aa).

The KH type-2 domain maps to 39–107 (VRQVLRKKMS…PVHINVIEVR (69 aa)). Residues 214-239 (SQEKQDDGSRGDRNADRSSRRSREVR) form a disordered region. Basic and acidic residues predominate over residues 216–239 (EKQDDGSRGDRNADRSSRRSREVR).

Belongs to the universal ribosomal protein uS3 family. In terms of assembly, part of the 30S ribosomal subunit. Forms a tight complex with proteins S10 and S14.

Binds the lower part of the 30S subunit head. Binds mRNA in the 70S ribosome, positioning it for translation. The sequence is that of Small ribosomal subunit protein uS3 from Xylella fastidiosa (strain M23).